The chain runs to 500 residues: Glycerol kinase (500 aa).

Thr-13 serves as a coordination point for ADP. Positions 13, 14, and 15 each coordinate ATP. A sn-glycerol 3-phosphate-binding site is contributed by Thr-13. Residue Arg-17 coordinates ADP. The sn-glycerol 3-phosphate site is built by Arg-83, Glu-84, Tyr-135, and Asp-245. The glycerol site is built by Arg-83, Glu-84, Tyr-135, Asp-245, and Gln-246. ADP is bound by residues Thr-267 and Gly-310. 4 residues coordinate ATP: Thr-267, Gly-310, Gln-314, and Gly-411. Residues Gly-411 and Asn-415 each coordinate ADP.

This sequence belongs to the FGGY kinase family. In terms of assembly, homotetramer and homodimer (in equilibrium).

It carries out the reaction glycerol + ATP = sn-glycerol 3-phosphate + ADP + H(+). Its pathway is polyol metabolism; glycerol degradation via glycerol kinase pathway; sn-glycerol 3-phosphate from glycerol: step 1/1. Its activity is regulated as follows. Activated by phosphorylation and inhibited by fructose 1,6-bisphosphate (FBP). Key enzyme in the regulation of glycerol uptake and metabolism. Catalyzes the phosphorylation of glycerol to yield sn-glycerol 3-phosphate. The protein is Glycerol kinase of Lactobacillus acidophilus (strain ATCC 700396 / NCK56 / N2 / NCFM).